We begin with the raw amino-acid sequence, 400 residues long: Enoyl-[acyl-carrier-protein] reductase [NADH] (400 aa).

NAD(+) is bound by residues 48-53 (GSSSGY), 74-75 (FE), 111-112 (DA), and 139-140 (LA). Tyrosine 225 provides a ligand contact to substrate. The Proton donor role is filled by tyrosine 235. Residues lysine 244 and 273 to 275 (VVT) contribute to the NAD(+) site.

Belongs to the TER reductase family. In terms of assembly, monomer.

The enzyme catalyses a 2,3-saturated acyl-[ACP] + NAD(+) = a (2E)-enoyl-[ACP] + NADH + H(+). The protein operates within lipid metabolism; fatty acid biosynthesis. Its function is as follows. Involved in the final reduction of the elongation cycle of fatty acid synthesis (FAS II). Catalyzes the reduction of a carbon-carbon double bond in an enoyl moiety that is covalently linked to an acyl carrier protein (ACP). This Shewanella denitrificans (strain OS217 / ATCC BAA-1090 / DSM 15013) protein is Enoyl-[acyl-carrier-protein] reductase [NADH].